We begin with the raw amino-acid sequence, 446 residues long: Phosphoglucosamine mutase (446 aa).

S104 functions as the Phosphoserine intermediate in the catalytic mechanism. Residues S104, D241, D243, and D245 each coordinate Mg(2+). Phosphoserine is present on S104.

It belongs to the phosphohexose mutase family. It depends on Mg(2+) as a cofactor. Post-translationally, activated by phosphorylation.

The catalysed reaction is alpha-D-glucosamine 1-phosphate = D-glucosamine 6-phosphate. Its function is as follows. Catalyzes the conversion of glucosamine-6-phosphate to glucosamine-1-phosphate. The polypeptide is Phosphoglucosamine mutase (Teredinibacter turnerae (strain ATCC 39867 / T7901)).